The chain runs to 230 residues: Probable methylthioribulose-1-phosphate dehydratase (230 aa).

C87 provides a ligand contact to substrate. Zn(2+) contacts are provided by H105 and H107. E129 functions as the Proton donor/acceptor in the catalytic mechanism. H185 lines the Zn(2+) pocket.

The protein belongs to the aldolase class II family. MtnB subfamily. It depends on Zn(2+) as a cofactor.

The protein localises to the cytoplasm. The enzyme catalyses 5-(methylsulfanyl)-D-ribulose 1-phosphate = 5-methylsulfanyl-2,3-dioxopentyl phosphate + H2O. Its pathway is amino-acid biosynthesis; L-methionine biosynthesis via salvage pathway; L-methionine from S-methyl-5-thio-alpha-D-ribose 1-phosphate: step 2/6. In terms of biological role, catalyzes the dehydration of methylthioribulose-1-phosphate (MTRu-1-P) into 2,3-diketo-5-methylthiopentyl-1-phosphate (DK-MTP-1-P). This is Probable methylthioribulose-1-phosphate dehydratase from Drosophila pseudoobscura pseudoobscura (Fruit fly).